The primary structure comprises 117 residues: Prefoldin subunit beta (117 aa).

The protein belongs to the prefoldin subunit beta family. As to quaternary structure, heterohexamer of two alpha and four beta subunits.

The protein localises to the cytoplasm. Functionally, molecular chaperone capable of stabilizing a range of proteins. Seems to fulfill an ATP-independent, HSP70-like function in archaeal de novo protein folding. This chain is Prefoldin subunit beta, found in Methanosarcina barkeri (strain Fusaro / DSM 804).